Reading from the N-terminus, the 212-residue chain is MVDCVVKNWQGEEVGQATLNLRVAKEESAAHIVHRSLRLQMANNRQGTASTKTRSEVRGGGRKPWRQKGTGRARAGSIRSPLWRGGGVIFGPKPRDYSHKMNRKEKRLALSTAFQSRSEDLIVIEDLSEQFTKPKTKELVQAITRWGIDIQAKIVLVLPEKQENVYLSGRNIAKLKIILANNLNIYDILAADKIIATVTAIAKIQEVYGNET.

Residues asparagine 43–lysine 52 are compositionally biased toward polar residues. Residues asparagine 43–serine 77 form a disordered region. Residues glycine 60 to glycine 71 are compositionally biased toward basic residues.

It belongs to the universal ribosomal protein uL4 family. In terms of assembly, part of the 50S ribosomal subunit.

Its function is as follows. One of the primary rRNA binding proteins, this protein initially binds near the 5'-end of the 23S rRNA. It is important during the early stages of 50S assembly. It makes multiple contacts with different domains of the 23S rRNA in the assembled 50S subunit and ribosome. In terms of biological role, forms part of the polypeptide exit tunnel. The sequence is that of Large ribosomal subunit protein uL4 from Trichodesmium erythraeum (strain IMS101).